Here is a 633-residue protein sequence, read N- to C-terminus: 1-deoxy-D-xylulose-5-phosphate synthase (633 aa).

Thiamine diphosphate is bound by residues His74 and 115 to 117 (GHA). Mg(2+) is bound at residue Asp146. Residues 147-148 (GA), Asn175, Tyr286, and Glu363 each bind thiamine diphosphate. Asn175 contacts Mg(2+).

It belongs to the transketolase family. DXPS subfamily. In terms of assembly, homodimer. Mg(2+) is required as a cofactor. The cofactor is thiamine diphosphate.

It catalyses the reaction D-glyceraldehyde 3-phosphate + pyruvate + H(+) = 1-deoxy-D-xylulose 5-phosphate + CO2. Its pathway is metabolic intermediate biosynthesis; 1-deoxy-D-xylulose 5-phosphate biosynthesis; 1-deoxy-D-xylulose 5-phosphate from D-glyceraldehyde 3-phosphate and pyruvate: step 1/1. In terms of biological role, catalyzes the acyloin condensation reaction between C atoms 2 and 3 of pyruvate and glyceraldehyde 3-phosphate to yield 1-deoxy-D-xylulose-5-phosphate (DXP). The chain is 1-deoxy-D-xylulose-5-phosphate synthase from Dehalococcoides mccartyi (strain ATCC BAA-2100 / JCM 16839 / KCTC 5957 / BAV1).